The chain runs to 680 residues: UvrABC system protein B (680 aa).

The 396-residue stretch at 27-422 (AGALGGVTFQ…GRMAGEHVAE (396 aa)) folds into the Helicase ATP-binding domain. 40 to 47 (GATGTGKT) serves as a coordination point for ATP. Positions 93-116 (YYDYYQPEAYIPQTDTYIEKSASI) match the Beta-hairpin motif. The region spanning 443–609 (QVDDLLHEIH…PIVKRLDANS (167 aa)) is the Helicase C-terminal domain. A UVR domain is found at 641–676 (PELVSQLEIQMRDAAKKLEFEKAAEYRDKIHKLRER).

It belongs to the UvrB family. As to quaternary structure, forms a heterotetramer with UvrA during the search for lesions. Interacts with UvrC in an incision complex.

The protein localises to the cytoplasm. In terms of biological role, the UvrABC repair system catalyzes the recognition and processing of DNA lesions. A damage recognition complex composed of 2 UvrA and 2 UvrB subunits scans DNA for abnormalities. Upon binding of the UvrA(2)B(2) complex to a putative damaged site, the DNA wraps around one UvrB monomer. DNA wrap is dependent on ATP binding by UvrB and probably causes local melting of the DNA helix, facilitating insertion of UvrB beta-hairpin between the DNA strands. Then UvrB probes one DNA strand for the presence of a lesion. If a lesion is found the UvrA subunits dissociate and the UvrB-DNA preincision complex is formed. This complex is subsequently bound by UvrC and the second UvrB is released. If no lesion is found, the DNA wraps around the other UvrB subunit that will check the other stand for damage. This chain is UvrABC system protein B, found in Gloeobacter violaceus (strain ATCC 29082 / PCC 7421).